The primary structure comprises 113 residues: Ribosome-binding factor A (113 aa).

This sequence belongs to the RbfA family. As to quaternary structure, monomer. Binds 30S ribosomal subunits, but not 50S ribosomal subunits or 70S ribosomes.

The protein localises to the cytoplasm. Its function is as follows. One of several proteins that assist in the late maturation steps of the functional core of the 30S ribosomal subunit. Associates with free 30S ribosomal subunits (but not with 30S subunits that are part of 70S ribosomes or polysomes). Required for efficient processing of 16S rRNA. May interact with the 5'-terminal helix region of 16S rRNA. The sequence is that of Ribosome-binding factor A from Oceanobacillus iheyensis (strain DSM 14371 / CIP 107618 / JCM 11309 / KCTC 3954 / HTE831).